Here is a 338-residue protein sequence, read N- to C-terminus: S-adenosylmethionine:tRNA ribosyltransferase-isomerase (338 aa).

Belongs to the QueA family. As to quaternary structure, monomer.

It localises to the cytoplasm. It carries out the reaction 7-aminomethyl-7-carbaguanosine(34) in tRNA + S-adenosyl-L-methionine = epoxyqueuosine(34) in tRNA + adenine + L-methionine + 2 H(+). It participates in tRNA modification; tRNA-queuosine biosynthesis. Functionally, transfers and isomerizes the ribose moiety from AdoMet to the 7-aminomethyl group of 7-deazaguanine (preQ1-tRNA) to give epoxyqueuosine (oQ-tRNA). This chain is S-adenosylmethionine:tRNA ribosyltransferase-isomerase, found in Francisella tularensis subsp. novicida (strain U112).